The sequence spans 140 residues: Endoribonuclease YbeY (140 aa).

The Zn(2+) site is built by His99, His103, and His109.

This sequence belongs to the endoribonuclease YbeY family. Zn(2+) serves as cofactor.

Its subcellular location is the cytoplasm. Single strand-specific metallo-endoribonuclease involved in late-stage 70S ribosome quality control and in maturation of the 3' terminus of the 16S rRNA. The protein is Endoribonuclease YbeY of Wolinella succinogenes (strain ATCC 29543 / DSM 1740 / CCUG 13145 / JCM 31913 / LMG 7466 / NCTC 11488 / FDC 602W) (Vibrio succinogenes).